A 543-amino-acid chain; its full sequence is Hydroxylamine reductase (543 aa).

Residues cysteine 5, cysteine 8, cysteine 17, and cysteine 23 each coordinate [4Fe-4S] cluster. The hybrid [4Fe-2O-2S] cluster site is built by histidine 250, glutamate 274, cysteine 318, cysteine 410, cysteine 438, cysteine 463, glutamate 498, and lysine 500. Cysteine 410 carries the cysteine persulfide modification.

The protein belongs to the HCP family. Requires [4Fe-4S] cluster as cofactor. Hybrid [4Fe-2O-2S] cluster serves as cofactor.

It is found in the cytoplasm. The catalysed reaction is A + NH4(+) + H2O = hydroxylamine + AH2 + H(+). Its function is as follows. Catalyzes the reduction of hydroxylamine to form NH(3) and H(2)O. The sequence is that of Hydroxylamine reductase from Petrotoga mobilis (strain DSM 10674 / SJ95).